The chain runs to 63 residues: Small ribosomal subunit protein bS21 (63 aa).

Belongs to the bacterial ribosomal protein bS21 family.

This Phocaeicola vulgatus (strain ATCC 8482 / DSM 1447 / JCM 5826 / CCUG 4940 / NBRC 14291 / NCTC 11154) (Bacteroides vulgatus) protein is Small ribosomal subunit protein bS21.